Reading from the N-terminus, the 435-residue chain is GPI-anchor transamidase component PIGU (435 aa).

Residues 1-3 (MAA) are Cytoplasmic-facing. The helical transmembrane segment at 4–22 (PLALVLVVAVTVRAALFRS) threads the bilayer. Topologically, residues 23–78 (SLAEFISERVEVVSPLSSWKRVVEGLSLLDLGVSPYSGAVFHETPLIIYLFHFLID) are lumenal. The chain crosses the membrane as a helical span at residues 79–99 (YAELVFMITDALTAIALYFAI). Over 100 to 136 (QDFNKVVFKKQKLLLELDQYAPDVAELIRTPMEMRYI) the chain is Cytoplasmic. The next 4 helical transmembrane spans lie at 137–158 (PLKV…VAKS), 159–178 (TCAI…IKGS), 179–194 (VFLS…YQTL), and 195–205 (YPVTLFAPGLL). Over 206-222 (YLLQRQYIPVKVKSKAF) the chain is Cytoplasmic. Position 216 (K216) interacts with a cardiolipin. A helical membrane pass occupies residues 223–244 (WIFSWEYAMMYIGSLVVIVCLS). Residues 245–286 (FFLLSSWDFIPAVYGFILSVPDLTPNIGLFWYFFAEMFEHFS) lie on the Lumenal side of the membrane. A helical membrane pass occupies residues 287-306 (LFFVCVFQINVFFYTVPLAI). At 307 to 311 (KLKEH) the chain is on the cytoplasmic side. An a cardiolipin-binding site is contributed by K309. The next 2 helical transmembrane spans lie at 312 to 331 (PIFF…SYPT) and 332 to 345 (VGDV…FPVW). At 346–354 (NHLYRFLRN) the chain is on the cytoplasmic side. Residues 355-372 (VFVLTCIIVVCSLLFPVL) form a helical membrane-spanning segment. Over 373 to 384 (WHLWIYAGSANS) the chain is Lumenal. 2 residues coordinate a 2-acyl-6-[6-phosphoethanolamine-alpha-D-mannosyl-(1-&gt;2)-6-phosphoethanolamine-alpha-D-mannosyl-(1-&gt;6)-2-phosphoethanolamine-alpha-D-mannosyl-(1-&gt;4)-alpha-D-glucosaminyl]-1-(1-radyl,2-acyl-sn-glycero-3-phospho)-1D-myo-inositol: N383 and N385. Residues 385–406 (NFFYAITLTFNVGQILLISDYF) traverse the membrane as a helical segment. Over 407–435 (YAFLRREYYLTHGLYLTAKDGTEAMLVLK) the chain is Cytoplasmic.

Belongs to the PIGU family. In terms of assembly, heteropentamer. Part of the GPI-anchor transamidase complex, consisting of PIGK, PIGT, PIGS, PIGU and GAA1.

The protein localises to the endoplasmic reticulum membrane. It participates in glycolipid biosynthesis; glycosylphosphatidylinositol-anchor biosynthesis. Functionally, component of the glycosylphosphatidylinositol-anchor (GPI-anchor) transamidase (GPI-T) complex that catalyzes the formation of the linkage between a proprotein and a GPI-anchor and participates in GPI anchored protein biosynthesis. Binds the lipid portion of GPI-anchor. May act as an organizer in the transmembrane layer to recruit other subunits, and thus is essential for assembly of the complex. The protein is GPI-anchor transamidase component PIGU of Cricetulus griseus (Chinese hamster).